The primary structure comprises 154 residues: Minor structural pilin EpdC (154 aa).

Positions 1–13 are excised as a propeptide; the sequence is MIKMLQLPFNKKG. The short motif at 14–24 is the QXSXEXXXL element; it reads QVSFDFIIAML.

Post-translationally, the N-terminus is cleaved by the prepilin peptidase EppA, which recognizes the class III signal sequence.

The protein resides in the secreted. The protein localises to the cell surface. Its subcellular location is the fimbrium. Its function is as follows. Minor component of the type IV-like pili. Essential for pili formation. The polypeptide is Minor structural pilin EpdC (Methanococcus maripaludis (strain DSM 14266 / JCM 13030 / NBRC 101832 / S2 / LL)).